The sequence spans 359 residues: Putative nucleotidyltransferase MAB21L1 (359 aa).

A ribonucleoside 5'-triphosphate contacts are provided by residues 23-24 (RK) and 63-66 (YEGL). Glu73 and Glu75 together coordinate Mg(2+). A ribonucleoside 5'-triphosphate is bound by residues Lys248 and 252–255 (SLLK).

Belongs to the mab-21 family. In terms of assembly, monomer. Homodecamer; composed of 2 back to back homopentamers. The protein may exist as monomer in solution and oiligomerizes upon ligand binding.

Its subcellular location is the nucleus. Putative nucleotidyltransferase required for several aspects of embryonic development including normal development of the eye. It is unclear whether it displays nucleotidyltransferase activity in vivo. Binds single-stranded RNA (ssRNA). The protein is Putative nucleotidyltransferase MAB21L1 (mab21l1) of Xenopus tropicalis (Western clawed frog).